The following is a 204-amino-acid chain: Ras-related protein RabQ (204 aa).

12-19 is a binding site for GTP; the sequence is GPPFVGKS. The short motif at 34–42 is the Effector region element; it reads MDTTIGVEF. GTP contacts are provided by residues 60–64 and 118–121; these read DTAGQ and NKCD. S-geranylgeranyl cysteine attachment occurs at residues C202 and C203.

Belongs to the small GTPase superfamily. Rab family.

It is found in the cell membrane. The protein is Ras-related protein RabQ (rabQ) of Dictyostelium discoideum (Social amoeba).